We begin with the raw amino-acid sequence, 185 residues long: Uroplakin-2 (185 aa).

An N-terminal signal peptide occupies residues 1-26; it reads MASPWPVWTLSWILILLAVLVPGAAA. Residues 27 to 85 constitute a propeptide that is removed on maturation; it reads DFNISSLSGLLSPVMTESLLVALPPCHLTGGNATLTVRRANDSKVVRSSFVVPPCRGRR. Asn-29, Asn-58, and Asn-67 each carry an N-linked (GlcNAc...) asparagine glycan. The Lumenal portion of the chain corresponds to 86 to 156; the sequence is ELVSVVDSGS…IGLAMARTGG (71 aa). A helical membrane pass occupies residues 157–177; it reads MVVITVLLSVAMFLLVLGLII. At 178 to 185 the chain is on the cytoplasmic side; it reads ALALGARK.

The protein belongs to the uroplakin-2 family. In terms of assembly, interacts with uroplakin-1a (UPK1A). In terms of tissue distribution, bladder epithelium.

Its subcellular location is the cell membrane. In terms of biological role, component of the asymmetric unit membrane (AUM); a highly specialized biomembrane elaborated by terminally differentiated urothelial cells. May play an important role in regulating the assembly of the AUM. In Bos taurus (Bovine), this protein is Uroplakin-2 (UPK2).